The primary structure comprises 790 residues: Lon protease 2 (790 aa).

The 193-residue stretch at 18–210 (LRILPLRNMV…HVTFYMTRQL (193 aa)) folds into the Lon N-terminal domain. 362–369 (GPPGVGKT) is a binding site for ATP. The 182-residue stretch at 598-779 (SWGCGIATGL…SDVLQLALLP (182 aa)) folds into the Lon proteolytic domain. Residues S685 and K728 contribute to the active site.

The protein belongs to the peptidase S16 family. As to quaternary structure, homohexamer. Organized in a ring with a central cavity.

It localises to the cytoplasm. The catalysed reaction is Hydrolysis of proteins in presence of ATP.. Its function is as follows. ATP-dependent serine protease that mediates the selective degradation of mutant and abnormal proteins as well as certain short-lived regulatory proteins. Required for cellular homeostasis and for survival from DNA damage and developmental changes induced by stress. Degrades polypeptides processively to yield small peptide fragments that are 5 to 10 amino acids long. Binds to DNA in a double-stranded, site-specific manner. This Syntrophobacter fumaroxidans (strain DSM 10017 / MPOB) protein is Lon protease 2.